Here is a 234-residue protein sequence, read N- to C-terminus: dTDP-4-amino-4,6-dideoxyglucose formyltransferase (234 aa).

Residues asparagine 9 and 62 to 64 (HCK) each bind dTDP-4-amino-4,6-dideoxy-alpha-D-glucose. A (6R)-10-formyltetrahydrofolate-binding site is contributed by 65 to 67 (QRF). Histidine 81 acts as the Proton acceptor in catalysis. 90–94 (GWFPQ) is a dTDP-4-amino-4,6-dideoxy-alpha-D-glucose binding site. Residues aspartate 112, aspartate 116, and lysine 175 each contribute to the (6R)-10-formyltetrahydrofolate site. Position 209 (asparagine 209) interacts with dTDP-4-amino-4,6-dideoxy-alpha-D-glucose.

Belongs to the dTDP-Qui4N formyltransferase family. Homodimer.

It catalyses the reaction dTDP-4-amino-4,6-dideoxy-alpha-D-glucose + (6R)-10-formyltetrahydrofolate = dTDP-4-formamido-4,6-dideoxy-alpha-D-glucose + (6S)-5,6,7,8-tetrahydrofolate + H(+). Sugar N-formyltransferase that catalyzes the conversion of dTDP-4-amino-4,6-dideoxyglucose into dTDP-4-formamido-4,6-dideoxyglucose using N(10)-formyltetrahydrofolate as the carbon source. Plays a role in virulence. The protein is dTDP-4-amino-4,6-dideoxyglucose formyltransferase of Mycobacterium bovis (strain ATCC BAA-935 / AF2122/97).